Consider the following 60-residue polypeptide: Large ribosomal subunit protein uL30 (60 aa).

Belongs to the universal ribosomal protein uL30 family. In terms of assembly, part of the 50S ribosomal subunit.

This Streptomyces filamentosus (Streptomyces roseosporus) protein is Large ribosomal subunit protein uL30.